A 168-amino-acid polypeptide reads, in one-letter code: MLVYQDLLSGDELPSDSFSYTELGNGVLWEVQGKWVVQGAVDVNIGANPSAEGADEDEGVDDQAIKVVDIVDTFRLQEQPSFDKKQFVAYMKKYIKNLTPKLGAEQEEVFKNNIQGATKYLLSKLSDLQFFVGESMADDTGMVFAYYKDGATDPTFLYLAHGLKEVKC.

In terms of domain architecture, TCTP spans 1-168; that stretch reads MLVYQDLLSG…LAHGLKEVKC (168 aa).

The protein belongs to the TCTP family.

It localises to the cytoplasm. In terms of biological role, involved in calcium binding and microtubule stabilization. This is Translationally-controlled tumor protein homolog (TCTP) from Nicotiana tabacum (Common tobacco).